A 38-amino-acid polypeptide reads, in one-letter code: Photosystem II reaction center protein L (38 aa).

A helical transmembrane segment spans residues 17–37; sequence SLFWGLLLIFVLAILFSSYIF.

This sequence belongs to the PsbL family. PSII is composed of 1 copy each of membrane proteins PsbA, PsbB, PsbC, PsbD, PsbE, PsbF, PsbH, PsbI, PsbJ, PsbK, PsbL, PsbM, PsbT, PsbX, PsbY, PsbZ, Psb30/Ycf12, at least 3 peripheral proteins of the oxygen-evolving complex and a large number of cofactors. It forms dimeric complexes.

It is found in the plastid. The protein localises to the cyanelle thylakoid membrane. Functionally, one of the components of the core complex of photosystem II (PSII). PSII is a light-driven water:plastoquinone oxidoreductase that uses light energy to abstract electrons from H(2)O, generating O(2) and a proton gradient subsequently used for ATP formation. It consists of a core antenna complex that captures photons, and an electron transfer chain that converts photonic excitation into a charge separation. This subunit is found at the monomer-monomer interface and is required for correct PSII assembly and/or dimerization. This chain is Photosystem II reaction center protein L, found in Cyanophora paradoxa.